The chain runs to 277 residues: Bis(5'-nucleosyl)-tetraphosphatase, symmetrical (277 aa).

The protein belongs to the Ap4A hydrolase family.

The catalysed reaction is P(1),P(4)-bis(5'-adenosyl) tetraphosphate + H2O = 2 ADP + 2 H(+). In terms of biological role, hydrolyzes diadenosine 5',5'''-P1,P4-tetraphosphate to yield ADP. The chain is Bis(5'-nucleosyl)-tetraphosphatase, symmetrical from Methylobacillus flagellatus (strain ATCC 51484 / DSM 6875 / VKM B-1610 / KT).